Consider the following 265-residue polypeptide: Mlc titration factor A (265 aa).

4 residues coordinate Zn(2+): histidine 111, histidine 148, histidine 152, and glutamate 211.

This sequence belongs to the MtfA family. As to quaternary structure, interacts with Mlc. Requires Zn(2+) as cofactor.

The protein resides in the cytoplasm. Involved in the modulation of the activity of the glucose-phosphotransferase system (glucose-PTS). Interacts with the transcriptional repressor Mlc, preventing its interaction with DNA and leading to the modulation of expression of genes regulated by Mlc, including ptsG, which encodes the PTS system glucose-specific EIICB component. In terms of biological role, shows zinc-dependent metallopeptidase activity. The sequence is that of Mlc titration factor A from Escherichia coli (strain SMS-3-5 / SECEC).